The sequence spans 309 residues: Caspase-7 (309 aa).

Residues 1-24 (MSGDQHADRSSGEKSNGDQDDTVD) constitute a propeptide, N-terminally processed. The segment covering 1 to 31 (MSGDQHADRSSGEKSNGDQDDTVDAKPDRSS) has biased composition (basic and acidic residues). The tract at residues 1–53 (MSGDQHADRSSGEKSNGDQDDTVDAKPDRSSRLSLFAKKKKNGEEEQPKSSLS) is disordered. Residues 39–42 (KKKN) are exosite. The segment at 81–92 (KNFEDKTGMGTR) is loop L1. Catalysis depends on residues His149 and Cys191. Residues 192–201 (RGSEFDEGIQ) are loop L2. Residues 204–214 (SGPANDTLETD) constitute a propeptide that is removed on maturation. Residues 234–246 (VPGYYSWRNPGRG) form a loop L3 region. The interval 282 to 296 (ESQSDDPRFSEKKQI) is loop L4.

It belongs to the peptidase C14A family. In terms of assembly, heterotetramer that consists of two anti-parallel arranged heterodimers, each one formed by a 20 kDa (p20) and a 11 kDa (p11) subunit. Post-translationally, cleavage by different proteases, such as granzyme B (GZMB), caspase-1 (CASP1), caspase-8 (CASP8) or caspase-9 (CASP9) generate the two active subunits. Its involvement in different programmed cell death processes is probably specified by the protease that activates CASP7. Cleaved and activated by initiator caspases (CASP8 and/or CASP9), leading to execution phase of apoptosis. Cleavage and maturation by GZMB regulates granzyme-mediated programmed cell death. Cleaved and activated by CASP1 in response to bacterial infection.

It localises to the cytoplasm. Its subcellular location is the cytosol. The protein resides in the nucleus. The protein localises to the secreted. It is found in the extracellular space. The enzyme catalyses Strict requirement for an Asp residue at position P1 and has a preferred cleavage sequence of Asp-Glu-Val-Asp-|-.. During activation, the N-terminal disordered prodomain is removed by cleavage. Concomitantly, double cleavage gives rise to a large Caspase-7 subunit p20 and a small Caspase-7 subunit p11. The two large and two small subunits then assemble to form the active CASP7 complex. Can be cleaved and activated by different caspases, depending on the context. Cleaved and activated by initiator caspases (CASP8 and/or CASP9), leading to execution phase of apoptosis. Cleavage and maturation by GZMB regulates granzyme-mediated programmed cell death. Cleavage and maturation by CASP1 regulates pyroptosis. Inhibited by BIRC6; following inhibition of BIRC6-caspase binding by DIABLO/SMAC, BIRC6 is subjected to caspase cleavage, leading to an increase in active caspases. Functionally, thiol protease involved in different programmed cell death processes, such as apoptosis, pyroptosis or granzyme-mediated programmed cell death, by proteolytically cleaving target proteins. Has a marked preference for Asp-Glu-Val-Asp (DEVD) consensus sequences, with some plasticity for alternate non-canonical sequences. Its involvement in the different programmed cell death processes is probably determined by upstream proteases that activate CASP7. Acts as an effector caspase involved in the execution phase of apoptosis: following cleavage and activation by initiator caspases (CASP8 and/or CASP9), mediates execution of apoptosis by catalyzing cleavage of proteins. Compared to CASP3, acts as a minor executioner caspase and cleaves a limited set of target proteins. Acts as a key regulator of the inflammatory response in response to bacterial infection by catalyzing cleavage and activation of the sphingomyelin phosphodiesterase SMPD1 in the extracellular milieu, thereby promoting membrane repair. Cleaves BIRC6 following inhibition of BIRC6-caspase binding by DIABLO/SMAC. The chain is Caspase-7 from Gallus gallus (Chicken).